The primary structure comprises 279 residues: Small ribosomal subunit protein uS2 (279 aa).

This sequence belongs to the universal ribosomal protein uS2 family. In terms of assembly, component of the small ribosomal subunit. Mature ribosomes consist of a small (40S) and a large (60S) subunit. The 40S subunit contains about 33 different proteins and 1 molecule of RNA (18S). The 60S subunit contains about 49 different proteins and 3 molecules of RNA (25S, 5.8S and 5S). Interacts with ribosomal protein S21.

It localises to the cytoplasm. Required for the assembly and/or stability of the 40S ribosomal subunit. Required for the processing of the 20S rRNA-precursor to mature 18S rRNA in a late step of the maturation of 40S ribosomal subunits. This chain is Small ribosomal subunit protein uS2, found in Chlamydomonas reinhardtii (Chlamydomonas smithii).